The chain runs to 508 residues: Steroid 17-alpha-hydroxylase/17,20 lyase (508 aa).

Residue cysteine 445 coordinates heme.

The protein belongs to the cytochrome P450 family. The cofactor is heme.

It localises to the membrane. The catalysed reaction is a C21-steroid + reduced [NADPH--hemoprotein reductase] + O2 = a 17alpha-hydroxy-C21-steroid + oxidized [NADPH--hemoprotein reductase] + H2O + H(+). It carries out the reaction 17alpha-hydroxyprogesterone + reduced [NADPH--hemoprotein reductase] + O2 = androst-4-ene-3,17-dione + acetate + oxidized [NADPH--hemoprotein reductase] + H2O + 2 H(+). It catalyses the reaction 17alpha-hydroxypregnenolone + reduced [NADPH--hemoprotein reductase] + O2 = 3beta-hydroxyandrost-5-en-17-one + acetate + oxidized [NADPH--hemoprotein reductase] + H2O + 2 H(+). It participates in lipid metabolism; steroid biosynthesis. Its function is as follows. Conversion of pregnenolone and progesterone to their 17-alpha-hydroxylated products and subsequently to dehydroepiandrosterone (DHEA) and androstenedione. Catalyzes both the 17-alpha-hydroxylation and the 17,20-lyase reaction. This is Steroid 17-alpha-hydroxylase/17,20 lyase (CYP17A1) from Gallus gallus (Chicken).